The sequence spans 299 residues: Tyrosine recombinase XerC (299 aa).

Residues 2 to 88 enclose the Core-binding (CB) domain; that stretch reads SALQPLIDTY…ALRSFLDYLV (87 aa). The region spanning 109 to 289 is the Tyr recombinase domain; that stretch reads PLPKNVSVDD…DFQHLSKIYD (181 aa). Catalysis depends on residues Arg-148, Lys-172, His-241, Arg-244, and His-267. The O-(3'-phospho-DNA)-tyrosine intermediate role is filled by Tyr-276.

It belongs to the 'phage' integrase family. XerC subfamily. As to quaternary structure, forms a cyclic heterotetrameric complex composed of two molecules of XerC and two molecules of XerD.

It is found in the cytoplasm. Functionally, site-specific tyrosine recombinase, which acts by catalyzing the cutting and rejoining of the recombining DNA molecules. The XerC-XerD complex is essential to convert dimers of the bacterial chromosome into monomers to permit their segregation at cell division. It also contributes to the segregational stability of plasmids. The sequence is that of Tyrosine recombinase XerC from Psychromonas ingrahamii (strain DSM 17664 / CCUG 51855 / 37).